The chain runs to 482 residues: 6-phosphogluconate dehydrogenase, decarboxylating (482 aa).

NADP(+) is bound by residues 17–22 (GLAVMG), 40–42 (NRS), 82–84 (VKA), and Asn-110. Residues Asn-110 and 136–138 (SGG) contribute to the substrate site. The active-site Proton acceptor is Lys-193. 196–197 (HN) serves as a coordination point for substrate. Glu-200 serves as the catalytic Proton donor. Residues Tyr-201, Lys-272, Arg-299, Arg-457, and His-463 each coordinate substrate.

This sequence belongs to the 6-phosphogluconate dehydrogenase family. In terms of assembly, homodimer.

It catalyses the reaction 6-phospho-D-gluconate + NADP(+) = D-ribulose 5-phosphate + CO2 + NADPH. It participates in carbohydrate degradation; pentose phosphate pathway; D-ribulose 5-phosphate from D-glucose 6-phosphate (oxidative stage): step 3/3. Functionally, catalyzes the oxidative decarboxylation of 6-phosphogluconate to ribulose 5-phosphate and CO(2), with concomitant reduction of NADP to NADPH. This is 6-phosphogluconate dehydrogenase, decarboxylating (gnd) from Synechocystis sp. (strain ATCC 27184 / PCC 6803 / Kazusa).